Reading from the N-terminus, the 342-residue chain is HPr kinase/phosphorylase (342 aa).

Catalysis depends on residues His-153 and Lys-174. An ATP-binding site is contributed by 168–175 (GKSGLGKS). Mg(2+) is bound at residue Ser-175. Asp-192 acts as the Proton acceptor; for phosphorylation activity. Proton donor; for dephosphorylation activity in catalysis. The important for the catalytic mechanism of both phosphorylation and dephosphorylation stretch occupies residues 217–226 (MEIRGLGVVD). Glu-218 is a binding site for Mg(2+). The active site involves Arg-259. The interval 280-285 (PIFPGK) is important for the catalytic mechanism of dephosphorylation.

This sequence belongs to the HPrK/P family. In terms of assembly, homohexamer. The cofactor is Mg(2+).

The enzyme catalyses [HPr protein]-L-serine + ATP = [HPr protein]-O-phospho-L-serine + ADP + H(+). The catalysed reaction is [HPr protein]-O-phospho-L-serine + phosphate + H(+) = [HPr protein]-L-serine + diphosphate. In terms of biological role, catalyzes the ATP- as well as the pyrophosphate-dependent phosphorylation of a specific serine residue in HPr, a phosphocarrier protein of the phosphoenolpyruvate-dependent sugar phosphotransferase system (PTS). HprK/P also catalyzes the pyrophosphate-producing, inorganic phosphate-dependent dephosphorylation (phosphorolysis) of seryl-phosphorylated HPr (P-Ser-HPr). In Chlorobaculum tepidum (strain ATCC 49652 / DSM 12025 / NBRC 103806 / TLS) (Chlorobium tepidum), this protein is HPr kinase/phosphorylase.